We begin with the raw amino-acid sequence, 221 residues long: Urease accessory protein UreF (221 aa).

It belongs to the UreF family. UreD, UreF and UreG form a complex that acts as a GTP-hydrolysis-dependent molecular chaperone, activating the urease apoprotein by helping to assemble the nickel containing metallocenter of UreC. The UreE protein probably delivers the nickel.

The protein localises to the cytoplasm. Its function is as follows. Required for maturation of urease via the functional incorporation of the urease nickel metallocenter. This Vibrio parahaemolyticus protein is Urease accessory protein UreF.